Reading from the N-terminus, the 515-residue chain is MMQVLLVTICLAVFPYQGSSIILESGNVNDYEVVYPQKVTALPKGAVQQAEQKYEDAMQYEFEVNGQPVVLHLEKNKDLFSEDYSETHYSPDGKEITTNPPIEDHCYYHGRIQNDAHSTASISACNGLKGHFKLRGETYLIEPLKIPDSEAHAVYKYENIEKEDDAPKMCGVTQTNWESDEPIKEASQLVATSDQQRYYDHFRYIKYFIVVDHRMVEKYNGNLRTIRRRIYQLVNILNEIYLPWNIRAPLVGIEFWNQRDLINVTSSAPYTLDLFGKWRASDLLNRKIHDYTHLLTAIVFVEQILGMAHIATMCHSELSVGLVQDYMPSEHVVAAIMVHEMGHNLGISHDEKYCNCGADSCIMYPQISIPPPVYFSNCSWEQYQNFLTIYKPDCTLIRPSRTDIVSPPVCGNDILEQGEECDCGSPEKCQDPCCDAASCKLHSWIECEFGECCDQCRFKPAGTECRGIRSECDLPEYCTGQSVDCPIDHFHRNGKPCLNNNGAEKGEFQHTGGRY.

The signal sequence occupies residues 1-20 (MMQVLLVTICLAVFPYQGSS). A propeptide spanning residues 21–193 (IILESGNVND…KEASQLVATS (173 aa)) is cleaved from the precursor. Residues 203–399 (RYIKYFIVVD…YKPDCTLIRP (197 aa)) form the Peptidase M12B domain. Residue asparagine 263 is glycosylated (N-linked (GlcNAc...) asparagine). 11 disulfide bridges follow: cysteine 314-cysteine 394, cysteine 354-cysteine 378, cysteine 356-cysteine 361, cysteine 410-cysteine 429, cysteine 421-cysteine 439, cysteine 423-cysteine 434, cysteine 433-cysteine 456, cysteine 447-cysteine 453, cysteine 452-cysteine 478, cysteine 465-cysteine 485, and cysteine 472-cysteine 497. Histidine 339 provides a ligand contact to Zn(2+). Residue glutamate 340 is part of the active site. 2 residues coordinate Zn(2+): histidine 343 and histidine 349. Asparagine 377 is a glycosylation site (N-linked (GlcNAc...) asparagine). The Disintegrin domain occupies 407 to 493 (PPVCGNDILE…DCPIDHFHRN (87 aa)). Positions 471-473 (ECD) match the D/ECD-tripeptide motif.

Belongs to the venom metalloproteinase (M12B) family. P-II subfamily. As to quaternary structure, monomer. Zn(2+) serves as cofactor. In terms of tissue distribution, expressed by the venom gland.

Its subcellular location is the secreted. Its function is as follows. Snake venom zinc metalloprotease that possesses hemorrhagic activity and degrades alpha chain of fibrinogen (FGA). May inhibit alpha-2/beta-1 integrin (ITGA2/ITGB1). The sequence is that of Zinc metalloproteinase-disintegrin BA-5A from Bitis arietans (African puff adder).